The following is a 158-amino-acid chain: Cytochrome c-type biogenesis protein CcmE (158 aa).

Over 1 to 23 (MNSQSFKNFPSLKFISKKRRKER) the chain is Cytoplasmic. Residues 24 to 44 (LLMVLLCLFIMAITTGLIVYA) traverse the membrane as a helical; Signal-anchor for type II membrane protein segment. At 45–158 (MRNTANFFRT…DRLKKHHDIK (114 aa)) the chain is on the periplasmic side. Heme is bound by residues His138 and Tyr142.

The protein belongs to the CcmE/CycJ family.

It localises to the cell inner membrane. Heme chaperone required for the biogenesis of c-type cytochromes. Transiently binds heme delivered by CcmC and transfers the heme to apo-cytochromes in a process facilitated by CcmF and CcmH. The protein is Cytochrome c-type biogenesis protein CcmE of Bartonella bacilliformis (strain ATCC 35685 / KC583 / Herrer 020/F12,63).